The chain runs to 247 residues: MYKLVLIRHGESTWNLENRFTGWTDVDLTATGVEQAKNAGRLLKAEGYDFDLAYTSVLKRATRTLWHTLDEMDRTWLPVQHSWRLNERHYGGLQGLNKADMAKQYGDAQVLVWRRSYDTPPPALEPQDPRSERSDVRYAQLDPSQVPLTECLKDTVARVLPFWNESIAPAILSGKRVVVAAHGNSIRALIKYLDGISDDAIVGVNVPNGIPLVYELDANLKPIRHYYLGDAEAAAKAAAAVAAQGKA.

Substrate is bound by residues Arg8–Asn15, Thr21–Gly22, Arg60, Glu87–Tyr90, Lys98, Arg114–Arg115, and Gly183–Asn184. Residue His9 is the Tele-phosphohistidine intermediate of the active site. Glu87 serves as the catalytic Proton donor/acceptor.

The protein belongs to the phosphoglycerate mutase family. BPG-dependent PGAM subfamily. As to quaternary structure, homodimer.

It carries out the reaction (2R)-2-phosphoglycerate = (2R)-3-phosphoglycerate. It participates in carbohydrate degradation; glycolysis; pyruvate from D-glyceraldehyde 3-phosphate: step 3/5. Its function is as follows. Catalyzes the interconversion of 2-phosphoglycerate and 3-phosphoglycerate. The chain is 2,3-bisphosphoglycerate-dependent phosphoglycerate mutase from Delftia acidovorans (strain DSM 14801 / SPH-1).